Here is a 299-residue protein sequence, read N- to C-terminus: Coenzyme PQQ synthesis protein B (299 aa).

This sequence belongs to the PqqB family.

Its pathway is cofactor biosynthesis; pyrroloquinoline quinone biosynthesis. Functionally, may be involved in the transport of PQQ or its precursor to the periplasm. The chain is Coenzyme PQQ synthesis protein B from Methylorubrum extorquens (strain PA1) (Methylobacterium extorquens).